Consider the following 204-residue polypeptide: MSKLKIDFPAVVYPDFTLIAGVDEVGRGPLVGDVVTACVILDANNPISGLADSKKLSEKKLALLFDEIQEKALFVAVGRASPVEIDALNILHATMLAMQRAVDNLSISPEFVFIDGNRCPQLSMPCESVVKGDARVAEISAASIIAKVTRDREMCELDKQYPHYGFAKHKGYPTKAHFAAIEKHGVTPEYRKSFKPVKKVLGLL.

The region spanning 17-204 (TLIAGVDEVG…KPVKKVLGLL (188 aa)) is the RNase H type-2 domain. Residues Asp-23, Glu-24, and Asp-115 each coordinate a divalent metal cation.

The protein belongs to the RNase HII family. It depends on Mn(2+) as a cofactor. Mg(2+) serves as cofactor.

It is found in the cytoplasm. It carries out the reaction Endonucleolytic cleavage to 5'-phosphomonoester.. Endonuclease that specifically degrades the RNA of RNA-DNA hybrids. The protein is Ribonuclease HII of Psychromonas ingrahamii (strain DSM 17664 / CCUG 51855 / 37).